The following is a 494-amino-acid chain: Neuronal acetylcholine receptor subunit alpha-6 (494 aa).

Positions 1 to 30 (MLNSRDQGNLHSGLCLWLCGFLALFKGSTG) are cleaved as a signal peptide. Topologically, residues 31–240 (CESEEQLFHR…TYSFYIRRLP (210 aa)) are extracellular. N54 and N171 each carry an N-linked (GlcNAc...) asparagine glycan. Disulfide bonds link C158-C172 and C222-C223. 3 helical membrane-spanning segments follow: residues 241–265 (MFYT…FYLP), 272–290 (VTLC…LVIT), and 306–327 (YLLF…VLNI). Residues 328–465 (HYRTPATHTM…WKYMAMVVDR (138 aa)) lie on the Cytoplasmic side of the membrane. The interval 399–423 (QKSSDIAPGKRRSSQQPARWVAENS) is disordered. A Phosphoserine modification is found at S401. A helical membrane pass occupies residues 466–485 (VFLWVFIIVCVFGTVGLFLQ).

The protein belongs to the ligand-gated ion channel (TC 1.A.9) family. Acetylcholine receptor (TC 1.A.9.1) subfamily. Alpha-6/CHRNA6 sub-subfamily. In terms of assembly, neuronal AChR is composed of two different types of subunits: alpha and non-alpha (beta). CHRNA6/alpha-6 subunit can be combined to CHRNB2/beta-2 and CHRNA4/alpha-4 to give rise to functional receptors. Interacts with LYPD6. As to expression, predominantly expressed in only a few brain areas, including dopaminergic neurons, norepirephrine neurons and cells of the visual system.

It is found in the synaptic cell membrane. It carries out the reaction K(+)(in) = K(+)(out). It catalyses the reaction Na(+)(in) = Na(+)(out). The catalysed reaction is Ca(2+)(in) = Ca(2+)(out). Activated by a myriad of ligands such as acetylcholine, cytisine and nicotine. CHRNA6 nAChR activity is inhibited by the antagonists alpha-conotoxin MII and PIA, a small disulfide-constrained peptides from cone snails. Its function is as follows. Component of neuronal acetylcholine receptors (nAChRs) that function as pentameric, ligand-gated cation channels with high calcium permeability among other activities. nAChRs are excitatory neurotrasnmitter receptors formed by a collection of nAChR subunits known to mediate synaptic transmission in the nervous system and the neuromuscular junction. Each nAchR subunit confers differential attributes to channel properties, including activation, deactivation and desensitization kinetics, pH sensitivity, cation permeability, and binding to allosteric modulators. CHRNA6 forms pentameric channels with CHRNB2 and CHRNA4 that exhibit high sensitivity to ACh and nicotine and are predominantly expressed in only a few brain areas, including dopaminergic neurons, norepirephrine neurons and cells of the visual system. nAChrs containing CHRNA6 subunits mediate endogenous cholinergic modulation of dopamine and gamma-aminobutyric acid (GABA) release in response to nicotine at nerve terminals. The protein is Neuronal acetylcholine receptor subunit alpha-6 (Chrna6) of Mus musculus (Mouse).